Here is a 318-residue protein sequence, read N- to C-terminus: Acetyl-coenzyme A carboxylase carboxyl transferase subunit alpha (318 aa).

Residues 38–292 (KLEKRLAKLE…NKTITKSLHA (255 aa)) enclose the CoA carboxyltransferase C-terminal domain.

This sequence belongs to the AccA family. In terms of assembly, acetyl-CoA carboxylase is a heterohexamer composed of biotin carboxyl carrier protein (AccB), biotin carboxylase (AccC) and two subunits each of ACCase subunit alpha (AccA) and ACCase subunit beta (AccD).

The protein localises to the cytoplasm. The enzyme catalyses N(6)-carboxybiotinyl-L-lysyl-[protein] + acetyl-CoA = N(6)-biotinyl-L-lysyl-[protein] + malonyl-CoA. Its pathway is lipid metabolism; malonyl-CoA biosynthesis; malonyl-CoA from acetyl-CoA: step 1/1. In terms of biological role, component of the acetyl coenzyme A carboxylase (ACC) complex. First, biotin carboxylase catalyzes the carboxylation of biotin on its carrier protein (BCCP) and then the CO(2) group is transferred by the carboxyltransferase to acetyl-CoA to form malonyl-CoA. The polypeptide is Acetyl-coenzyme A carboxylase carboxyl transferase subunit alpha (Listeria monocytogenes serovar 1/2a (strain ATCC BAA-679 / EGD-e)).